The primary structure comprises 312 residues: MAAAGGITMRQLLEAGVHFGHQTKRWNPKMKPFIFGARNGIYIIDLQKTVVMARSAFRFVADITARGGSVLFVGTKKQAQDVVREEASRAGQFFVTSRWLGGTLTNFKTIKQGIDRLKTLEKMAEDGTFERLPKKEVAQLEREREKLEKNLGGVKEMSKLPRCVFVIDPKKEHIAIHEAGRLGIPVIGLVDTNCDPDGIDFVIPGNDDAIRSIKLFTSKIAEACLEGAARYRASGAAERDEQEEREGRDDRGDRRDDRRGPRRGDRRDDRRDRGGDRGGDRRGPLVEMKGAAPVASAEPAAEAAPEGEAAAE.

Positions 232 to 312 are disordered; it reads RASGAAERDE…AAPEGEAAAE (81 aa). Positions 245–284 are enriched in basic and acidic residues; sequence REGRDDRGDRRDDRRGPRRGDRRDDRRDRGGDRGGDRRGP. The segment covering 291-312 has biased composition (low complexity); sequence AAPVASAEPAAEAAPEGEAAAE.

Belongs to the universal ribosomal protein uS2 family.

The sequence is that of Small ribosomal subunit protein uS2 from Myxococcus xanthus (strain DK1622).